The primary structure comprises 142 residues: uncharacterized protein (142 aa).

Residues 1-14 (MKNVSPRRNKHYKS) show a composition bias toward basic residues. The segment at 1 to 40 (MKNVSPRRNKHYKSYKPQVPLKKPVLLPQHPPYRNRRKKK) is disordered. Low complexity predominate over residues 16–28 (KPQVPLKKPVLLP).

This is an uncharacterized protein from Aquifex aeolicus (strain VF5).